A 202-amino-acid chain; its full sequence is Acireductone dioxygenase (202 aa).

Positions 110, 112, 116, and 154 each coordinate Fe(2+). 4 residues coordinate Ni(2+): H110, H112, E116, and H154.

Belongs to the acireductone dioxygenase (ARD) family. As to quaternary structure, monomer. Fe(2+) serves as cofactor. The cofactor is Ni(2+).

The catalysed reaction is 1,2-dihydroxy-5-(methylsulfanyl)pent-1-en-3-one + O2 = 3-(methylsulfanyl)propanoate + CO + formate + 2 H(+). It carries out the reaction 1,2-dihydroxy-5-(methylsulfanyl)pent-1-en-3-one + O2 = 4-methylsulfanyl-2-oxobutanoate + formate + 2 H(+). Its pathway is amino-acid biosynthesis; L-methionine biosynthesis via salvage pathway; L-methionine from S-methyl-5-thio-alpha-D-ribose 1-phosphate: step 5/6. Functionally, catalyzes 2 different reactions between oxygen and the acireductone 1,2-dihydroxy-3-keto-5-methylthiopentene (DHK-MTPene) depending upon the metal bound in the active site. Fe-containing acireductone dioxygenase (Fe-ARD) produces formate and 2-keto-4-methylthiobutyrate (KMTB), the alpha-ketoacid precursor of methionine in the methionine recycle pathway. Ni-containing acireductone dioxygenase (Ni-ARD) produces methylthiopropionate, carbon monoxide and formate, and does not lie on the methionine recycle pathway. The sequence is that of Acireductone dioxygenase from Synechococcus sp. (strain CC9311).